A 444-amino-acid chain; its full sequence is Retinoic acid receptor alpha-A (444 aa).

Residues Met1 to Ile71 form a modulating region. The span at Ser35–His46 shows a compositional bias: polar residues. The disordered stretch occupies residues Ser35–Pro67. Over residues Ser47–Ile58 the composition is skewed to low complexity. Positions Tyr72–Asn147 form a DNA-binding region, nuclear receptor. 2 NR C4-type zinc fingers span residues Cys75 to Cys95 and Cys111 to Cys130. Positions Asp148–Pro169 are hinge. One can recognise an NR LBD domain in the interval Asp170–Ser404. The 9aaTAD motif lies at Pro395–Asn403. The disordered stretch occupies residues Glu402–Pro444.

This sequence belongs to the nuclear hormone receptor family. NR1 subfamily. In terms of assembly, heterodimer; with an rxr molecule. Binds DNA preferentially as a rar/rxr heterodimer. As to expression, in the embryo, zygotic expression largely overlaps that of rarab, with high levels in hindbrain, lateral mesoderm and tail bud. In the adult, strong expression in brain and muscle, weaker expression in ovary, liver and digestive tract.

Its subcellular location is the nucleus. In terms of biological role, receptor for retinoic acid. Retinoic acid receptors bind as heterodimers to their target response elements in response to their ligands, all-trans or 9-cis retinoic acid, and regulate gene expression in various biological processes. The rar/rxr heterodimers bind to the retinoic acid response elements (RARE) composed of tandem 5'-AGGTCA-3' sites known as DR1-DR5. Required for hindbrain patterning. In Danio rerio (Zebrafish), this protein is Retinoic acid receptor alpha-A.